Here is a 223-residue protein sequence, read N- to C-terminus: Dephospho-CoA kinase (223 aa).

A DPCK domain is found at 3-204 (VFGLSGGAGS…AGRHRFRVAR (202 aa)). 11–16 (GSGKST) lines the ATP pocket.

It belongs to the CoaE family.

Its subcellular location is the cytoplasm. The catalysed reaction is 3'-dephospho-CoA + ATP = ADP + CoA + H(+). It functions in the pathway cofactor biosynthesis; coenzyme A biosynthesis; CoA from (R)-pantothenate: step 5/5. Its function is as follows. Catalyzes the phosphorylation of the 3'-hydroxyl group of dephosphocoenzyme A to form coenzyme A. This chain is Dephospho-CoA kinase, found in Anaplasma marginale (strain St. Maries).